Here is a 559-residue protein sequence, read N- to C-terminus: Pentatricopeptide repeat-containing protein At4g38010 (559 aa).

PPR repeat units lie at residues 70–104 (SSFSYNTLLSSYAVCDKPRVTIFAYKTFVSNGFSP), 105–139 (DMFTFPPVFKACGKFSGIREGKQIHGIVTKMGFYD), 140–170 (DIYVQNSLVHFYGVCGESRNACKVFGEMPVR), 171–201 (DVVSWTGIITGFTRTGLYKEALDTFSKMDVE), 203–233 (NLATYVCVLVSSGRVGCLSLGKGIHGLILKR), 238–268 (SLETGNALIDMYVKCEQLSDAMRVFGELEKK), 269–304 (DKVSWNSMISGLVHCERSKEAIDLFSLMQTSSGIKP), 305–339 (DGHILTSVLSACASLGAVDHGRWVHEYILTAGIKW), 340–370 (DTHIGTAIVDMYAKCGYIETALEIFNGIRSK), 371–405 (NVFTWNALLGGLAIHGHGLESLRYFEEMVKLGFKP), 406–440 (NLVTFLAALNACCHTGLVDEGRRYFHKMKSREYNL), and 443–473 (KLEHYGCMIDLLCRAGLLDEALELVKAMPVK). Residues 478–554 (ICGAILSACK…VPGSSYIEKF (77 aa)) form a type E motif region.

The protein belongs to the PPR family. PCMP-E subfamily.

This Arabidopsis thaliana (Mouse-ear cress) protein is Pentatricopeptide repeat-containing protein At4g38010 (PCMP-E45).